The sequence spans 398 residues: E3 ubiquitin-protein ligase ATL6 (398 aa).

A signal peptide spans 1-29; sequence MRSSDHMAFAGVLPIVFLLILSSADLAAS. A helical membrane pass occupies residues 50–70; the sequence is AVIVVILIAALFFMGFFSIYF. The RING-type; atypical zinc finger occupies 128 to 170; it reads CAICLNEFEDDETLRLLPKCDHVFHPHCIDAWLEAHVTCPVCR. Ser278 carries the post-translational modification Phosphoserine. The interval 368–398 is disordered; it reads PRGGVNKDGEGTSVKSTGASGSTSGSVRLPV. Residues 378–398 show a composition bias toward low complexity; it reads GTSVKSTGASGSTSGSVRLPV.

Belongs to the RING-type zinc finger family. ATL subfamily.

The protein resides in the membrane. The catalysed reaction is S-ubiquitinyl-[E2 ubiquitin-conjugating enzyme]-L-cysteine + [acceptor protein]-L-lysine = [E2 ubiquitin-conjugating enzyme]-L-cysteine + N(6)-ubiquitinyl-[acceptor protein]-L-lysine.. Its pathway is protein modification; protein ubiquitination. Functionally, E3 ubiquitin-protein ligase able to catalyze polyubiquitination with ubiquitin-conjugating enzyme E2 UBC8 in vitro. May be involved in the plant C/N response and the early steps of the plant defense signaling pathway. The polypeptide is E3 ubiquitin-protein ligase ATL6 (ATL6) (Arabidopsis thaliana (Mouse-ear cress)).